The primary structure comprises 440 residues: Protein ABHD8 (440 aa).

Residues 123–158 (DPAGSDGRSAPGSGSGSGSGSGSGGRRRRARRPKRT) are disordered. The span at 124–134 (PAGSDGRSAPG) shows a compositional bias: low complexity. Residues 135 to 146 (SGSGSGSGSGSG) show a composition bias toward gly residues. Basic residues predominate over residues 147 to 158 (GRRRRARRPKRT). An AB hydrolase-1 domain is found at 178–280 (VLFFIHGVGG…HKVIMINGGG (103 aa)). Residues S253, D371, and H399 each act as charge relay system in the active site.

This sequence belongs to the AB hydrolase superfamily. As to quaternary structure, interacts with NLRP3 (via NACHT and LLR domains); this interaction is enhanced in the presence of NLRP3 inflammasome inducers, such as ATP, nigericin, silica, or alum. Interacts with ZDHHC12.

It is found in the cytoplasm. Negatively regulates NLRP3-driven inflammation. Promotes NLRP3 degradation through the chaperone-mediated autophagy (CMA) pathway, hence attenuating inflammasome activation and IL1B secretion. Acts by recruiting palmitoyltransferase ZDHHC12 to NLRP3, facilitating NLRP3 palmitoylation and subsequent degradation. This is Protein ABHD8 from Macaca fascicularis (Crab-eating macaque).